The primary structure comprises 211 residues: Uracil phosphoribosyltransferase (211 aa).

5-phospho-alpha-D-ribose 1-diphosphate-binding positions include Arg78, Arg103, and 130–138 (DPMLATGGS). Residues Ile193 and 198–200 (GDA) each bind uracil. Asp199 is a 5-phospho-alpha-D-ribose 1-diphosphate binding site.

It belongs to the UPRTase family. Mg(2+) is required as a cofactor.

It carries out the reaction UMP + diphosphate = 5-phospho-alpha-D-ribose 1-diphosphate + uracil. The protein operates within pyrimidine metabolism; UMP biosynthesis via salvage pathway; UMP from uracil: step 1/1. With respect to regulation, allosterically activated by GTP. Functionally, catalyzes the conversion of uracil and 5-phospho-alpha-D-ribose 1-diphosphate (PRPP) to UMP and diphosphate. The chain is Uracil phosphoribosyltransferase from Hahella chejuensis (strain KCTC 2396).